Here is a 662-residue protein sequence, read N- to C-terminus: Glutathione hydrolase 7 (662 aa).

Residues 1 to 106 (MAAENEASQE…AAECSCRQDG (106 aa)) are Cytoplasmic-facing. 4 positions are modified to phosphoserine: serine 17, serine 72, serine 79, and serine 83. The interval 26-90 (SFPRLPEDEP…DGSPLRETRK (65 aa)) is disordered. The segment covering 72–83 (SSSSEMGSQDGS) has biased composition (low complexity). The helical; Signal-anchor for type II membrane protein transmembrane segment at 107–127 (LTVIVTACLTFATGVTVALVM) threads the bilayer. Over 128 to 662 (QIYFGDPQIF…SPDAAGATIL (535 aa)) the chain is Extracellular. N-linked (GlcNAc...) asparagine glycans are attached at residues asparagine 198, asparagine 267, asparagine 283, asparagine 330, asparagine 353, asparagine 394, asparagine 519, asparagine 523, and asparagine 586.

This sequence belongs to the gamma-glutamyltransferase family. As to quaternary structure, heterodimer composed of the light and heavy chains. The active site is located in the light chain. Post-translationally, cleaved by autocatalysis into a large and a small subunit and the autocatalytic cleavage is essential to the functional activation of the enzyme.

It localises to the membrane. The catalysed reaction is an N-terminal (5-L-glutamyl)-[peptide] + an alpha-amino acid = 5-L-glutamyl amino acid + an N-terminal L-alpha-aminoacyl-[peptide]. It carries out the reaction glutathione + H2O = L-cysteinylglycine + L-glutamate. The enzyme catalyses an S-substituted glutathione + H2O = an S-substituted L-cysteinylglycine + L-glutamate. Its pathway is sulfur metabolism; glutathione metabolism. In terms of biological role, hydrolyzes and transfers gamma-glutamyl moieties from glutathione and other gamma-glutamyl compounds to acceptors. The sequence is that of Glutathione hydrolase 7 from Mus musculus (Mouse).